The primary structure comprises 229 residues: MAKLTKRMKAIKAGVDSTKAYEINEAIAVLKQFATAKFDESVDVAVNLGIDPRKSDQNVRGATVLPNGTGRSVRVAVFTQGANADAAKEAGADLVGMEDLAEQIKKGEMNFDVVIASPDAMRVVGQLGQVLGPRGLMPNPKVGTVTPNVADAVKNAKSGQVRYRNDKNGIIHTTIGKASFSAEALTQNLQALLAALVKAKPTTAKGIFIKKVSISTTMGAGVAVDQNSL.

The protein belongs to the universal ribosomal protein uL1 family. Part of the 50S ribosomal subunit.

In terms of biological role, binds directly to 23S rRNA. The L1 stalk is quite mobile in the ribosome, and is involved in E site tRNA release. Protein L1 is also a translational repressor protein, it controls the translation of the L11 operon by binding to its mRNA. This chain is Large ribosomal subunit protein uL1, found in Mannheimia succiniciproducens (strain KCTC 0769BP / MBEL55E).